We begin with the raw amino-acid sequence, 525 residues long: Alcohol O-acetyltransferase 1 (525 aa).

The segment at 24-41 (GHARRMGSVEDLYVALNR) is membrane association. Active-site charge relay system residues include histidine 191 and aspartate 195. The membrane association stretch occupies residues 508–525 (QESLEELCSIYKALLLGP).

The protein belongs to the ATF1 alcohol acetyltransferase family.

The protein resides in the lipid droplet. It localises to the endoplasmic reticulum membrane. It catalyses the reaction an aliphatic alcohol + acetyl-CoA = an acetyl ester + CoA. The catalysed reaction is a fatty acyl-CoA + H2O = a fatty acid + CoA + H(+). The enzyme catalyses 3-methylbutanol + acetyl-CoA = 3-methylbutyl acetate + CoA. Found to be inhibited by cadmium, copper, zinc and mercurium divalent cations and sulfhydryl reagents. Inhibited by the addition of unsaturated fatty acids to the culture. In terms of biological role, major alcohol O-acetyltransferase that uses acetyl-CoA to synthesize acetate esters from various alcohols, producing ethyl acetate, isoamyl acetate, isobutyl acetate, butyl acetate, hexyl acetate, heptyl acetate and octyl acetate. The alcohol acyltransferase activity is promiscuous with regard to alcohol but relatively specific for acetyl-CoA since ATF1 does not use any other acyl-CoAs (C3, C4, C5, C6, C8, C10, C12). Acts also as an efficient thioesterase in vitro with specificity towards medium-chain-length acyl-CoAs. In natural environments, the production of aromatic volatile metabolites promotes dispersal through insect vectors. The polypeptide is Alcohol O-acetyltransferase 1 (Saccharomyces cerevisiae (strain ATCC 204508 / S288c) (Baker's yeast)).